Reading from the N-terminus, the 95-residue chain is Putative ESAT-6-like protein X (95 aa).

The tract at residues His-72–Ser-95 is disordered.

Belongs to the WXG100 family.

The protein is Putative ESAT-6-like protein X of Mycobacterium leprae (strain TN).